The sequence spans 268 residues: MRGAYYVAFALLVAASTRTAAEPDQAEPHIAPNNDYMTSGGAFNKMLPRRILRESPDPKDRLPVYASDEERMVNRLSNGNSIAKGLERTIMKAANVLRTNGEDVIANAAKPIKNYNRLRPKLEIKKSKRQRIEPTLSKSSEHKLHTTSNSKKSLVSSASAKGQGRDEPRATVNTAKKMQHNHRSAPSRSSPTSADVSDGRLEKQLNAQKAINLDKNKRPDEAKIRNKKQHVIDPTPKNENGQALRAPPTPESLGIGGKQCTVRIGREK.

Positions 1–21 are cleaved as a signal peptide; the sequence is MRGAYYVAFALLVAASTRTAA. A RxLR-dEER motif is present at residues 50–71; that stretch reads RILRESPDPKDRLPVYASDEER. Positions 120-257 are disordered; that stretch reads PKLEIKKSKR…PTPESLGIGG (138 aa). Positions 148–161 are enriched in low complexity; that stretch reads SNSKKSLVSSASAK. A compositionally biased stretch (basic and acidic residues) spans 212–224; that stretch reads NLDKNKRPDEAKI.

Belongs to the RxLR effector family.

It localises to the secreted. Its subcellular location is the host cell. Functionally, secreted effector that completely suppresses the host cell death induced by cell death-inducing proteins. The protein is Secreted RxLR effector protein 32 of Plasmopara viticola (Downy mildew of grapevine).